The chain runs to 166 residues: Pyruvoyl-dependent arginine decarboxylase (166 aa).

Pyruvic acid (Ser) is present on serine 45.

Belongs to the PdaD family. Requires pyruvate as cofactor.

The enzyme catalyses L-arginine + H(+) = agmatine + CO2. This chain is Pyruvoyl-dependent arginine decarboxylase, found in Methanocella arvoryzae (strain DSM 22066 / NBRC 105507 / MRE50).